Here is a 217-residue protein sequence, read N- to C-terminus: GTP cyclohydrolase 1 (217 aa).

Positions 109, 112, and 180 each coordinate Zn(2+).

The protein belongs to the GTP cyclohydrolase I family. Toroid-shaped homodecamer, composed of two pentamers of five dimers.

It carries out the reaction GTP + H2O = 7,8-dihydroneopterin 3'-triphosphate + formate + H(+). The protein operates within cofactor biosynthesis; 7,8-dihydroneopterin triphosphate biosynthesis; 7,8-dihydroneopterin triphosphate from GTP: step 1/1. The protein is GTP cyclohydrolase 1 of Vibrio cholerae serotype O1 (strain ATCC 39315 / El Tor Inaba N16961).